The chain runs to 653 residues: Protein fem-1 homolog A (653 aa).

ANK repeat units lie at residues 2–31 (DLHT…REEL), 40–70 (SGGT…SVEA), 82–111 (EGAP…SVNR), 115–145 (TNST…DLEV), 149–178 (HGHT…QVNR), 182–211 (KGNT…RMER), and 214–243 (YGMT…AGDE). S108 is modified (phosphoserine). Positions 242–274 (DEQAQPGLARVQPQGARSSPEEPPSGESYESCC) are disordered. 2 TPR repeats span residues 282 to 316 (VEAL…RHQG) and 374 to 407 (SYYI…QQNN). ANK repeat units follow at residues 518 to 560 (NGFT…DPDS) and 564 to 593 (DNNT…HMDA).

It belongs to the fem-1 family. In terms of assembly, component of a CRL2 E3 ubiquitin-protein ligase complex, also named ECS (Elongin BC-CUL2/5-SOCS-box protein) complex, composed of CUL2, Elongin BC (ELOB and ELOC), RBX1 and substrate-specific adapter FEM1A. Interacts with PTGER4. Interacts with NFKB1; the interaction is direct. In terms of processing, phosphorylated; highly phosphorylated in myoblasts and myotubes. Phosphorylation at Ser-108 promotes PGE2-EP4-mediated inhibition of inflammation. Dephosphorylated by protein phosphatase 2A (PP2A).

The protein localises to the mitochondrion. It localises to the cytoplasm. Its pathway is protein modification; protein ubiquitination. In terms of biological role, substrate-recognition component of a Cul2-RING (CRL2) E3 ubiquitin-protein ligase complex of the DesCEND (destruction via C-end degrons) pathway, which recognizes a C-degron located at the extreme C terminus of target proteins, leading to their ubiquitination and degradation. The C-degron recognized by the DesCEND pathway is usually a motif of less than ten residues and can be present in full-length proteins, truncated proteins or proteolytically cleaved forms. The CRL2(FEM1A) complex specifically recognizes proteins with an arginine at the C-terminus: recognizes and binds proteins ending with -Lys/Arg-Xaa-Arg and -Lys/Arg-Xaa-Xaa-Arg C-degrons, such as SIL1 or OR51B2, leading to their ubiquitination and degradation. Involved in PGE2-EP4-mediated inhibition of inflammation of macrophages via interaction with NFKB1 and PTGER4. Promotes inflammation in brain microglia through MAP2K4/MKK4-mediated signaling. This Bos taurus (Bovine) protein is Protein fem-1 homolog A.